Reading from the N-terminus, the 196-residue chain is Ribonuclease HII (196 aa).

Residues 9-196 enclose the RNase H type-2 domain; it reads SLIAGVDEVG…APVKRAIGLK (188 aa). Residues D15, E16, and D107 each contribute to the a divalent metal cation site.

The protein belongs to the RNase HII family. Requires Mn(2+) as cofactor. It depends on Mg(2+) as a cofactor.

Its subcellular location is the cytoplasm. The catalysed reaction is Endonucleolytic cleavage to 5'-phosphomonoester.. Endonuclease that specifically degrades the RNA of RNA-DNA hybrids. This Photorhabdus laumondii subsp. laumondii (strain DSM 15139 / CIP 105565 / TT01) (Photorhabdus luminescens subsp. laumondii) protein is Ribonuclease HII.